The following is a 456-amino-acid chain: Glycerol-3-phosphate acyltransferase 4 (456 aa).

The first 37 residues, 1–37 (MFLLLPFDSLIVNLLGISLTVLFTLLLVFIIVPAIFG), serve as a signal peptide directing secretion. The next 2 helical transmembrane spans lie at 156 to 176 (ISLR…CFLL) and 180 to 200 (IALA…VGYL). A glycan (N-linked (GlcNAc...) asparagine) is linked at asparagine 247. The HXXXXD motif motif lies at 248-253 (HTSPID). 3 N-linked (GlcNAc...) asparagine glycosylation sites follow: asparagine 327, asparagine 328, and asparagine 362.

It belongs to the 1-acyl-sn-glycerol-3-phosphate acyltransferase family. Ubiquitous. High levels in testis. Relatively high level of expression in skeletal muscle and heart. Relatively low level of expression in lung.

The protein resides in the endoplasmic reticulum membrane. The enzyme catalyses sn-glycerol 3-phosphate + an acyl-CoA = a 1-acyl-sn-glycero-3-phosphate + CoA. It catalyses the reaction dodecanoyl-CoA + sn-glycerol 3-phosphate = 1-dodecanoyl-sn-glycerol 3-phosphate + CoA. It carries out the reaction sn-glycerol 3-phosphate + hexadecanoyl-CoA = 1-hexadecanoyl-sn-glycero-3-phosphate + CoA. The catalysed reaction is sn-glycerol 3-phosphate + octadecanoyl-CoA = 1-octadecanoyl-sn-glycero-3-phosphate + CoA. The enzyme catalyses sn-glycerol 3-phosphate + (9Z)-octadecenoyl-CoA = 1-(9Z-octadecenoyl)-sn-glycero-3-phosphate + CoA. It catalyses the reaction (9Z,12Z)-octadecadienoyl-CoA + sn-glycerol 3-phosphate = 1-(9Z,12Z)-octadecadienoyl-sn-glycero-3-phosphate + CoA. It functions in the pathway phospholipid metabolism; CDP-diacylglycerol biosynthesis; CDP-diacylglycerol from sn-glycerol 3-phosphate: step 1/3. Inhibited by N-ethylmaleimide (NEM). In terms of biological role, converts glycerol-3-phosphate to 1-acyl-sn-glycerol-3-phosphate (lysophosphatidic acid or LPA) by incorporating an acyl moiety at the sn-1 position of the glycerol backbone. Active against both saturated and unsaturated long-chain fatty acyl-CoAs. Protects cells against lipotoxicity. The protein is Glycerol-3-phosphate acyltransferase 4 of Homo sapiens (Human).